The primary structure comprises 798 residues: Cold shock domain-containing protein E1 (798 aa).

The 62-residue stretch at 26–87 (ETGVIEKLLT…RTGKPIAIKL (62 aa)) folds into the CSD 1 domain. Residue Lys81 is modified to N6-acetyllysine. Lys91 participates in a covalent cross-link: Glycyl lysine isopeptide (Lys-Gly) (interchain with G-Cter in SUMO2). Ser123 is subject to Phosphoserine. The CSD 2; truncated domain occupies 136-179 (VFYLTYTSEDVEGNVQLETGDKINFVIDNNKHTGAVSARNIMLL). One can recognise a CSD 3 domain in the interval 186-245 (CQGVVCAMKEAFGFIERGDVVKEIFFHYSEFKGDLETLQPGDDVEFTIKDRNGKEVATDV). Ser276 is modified (phosphoserine). Positions 297 to 337 (LPFGDKDTKSKVTLLEGDHVRFNISTDRRDKLERATNIEVL) constitute a CSD 4; truncated domain. CSD domains follow at residues 349 to 410 (EMGV…AIRI) and 447 to 507 (NKGK…ATCV). Ser514 is modified (phosphoserine). One can recognise a CSD 7 domain in the interval 519–579 (LLGYVATLKD…KGNKVSAEKV (61 aa)). Ser584 is subject to Phosphoserine. CSD domains are found at residues 610–670 (PTQI…AYNI) and 674–735 (RRAT…ACNV). An SUZ-C domain is found at 748-789 (PRPDRLVNRLKNITLDDASAPRLMVLRQPRGPDNSMGFGAER). Position 761 is a phosphothreonine (Thr761).

It belongs to the UNR family. As to quaternary structure, component of a multi subunit autoregulatory ribonucleoprotein complex (ARC), at least composed of IGF2BP1, PABPC1 and CSDE1. Interacts with STRAP. Part of a complex associated with the FOS mCRD domain and consisting of PABPC1, PAIP1, HNRPD and SYNCRIP. The interaction with PABPC1 is direct and RNA-independent. Interacts with EIF4ENIF1/4E-T.

It is found in the cytoplasm. The protein localises to the stress granule. It localises to the P-body. Functionally, RNA-binding protein involved in translationally coupled mRNA turnover. Implicated with other RNA-binding proteins in the cytoplasmic deadenylation/translational and decay interplay of the FOS mRNA mediated by the major coding-region determinant of instability (mCRD) domain. Required for efficient formation of stress granules. The sequence is that of Cold shock domain-containing protein E1 from Mus musculus (Mouse).